The following is a 387-amino-acid chain: Putative ankyrin repeat protein RBE_0984 (387 aa).

5 ANK repeats span residues 50-79 (YGNT…DKDI), 88-119 (HRET…AINV), 123-154 (RKHT…VINV), 159-188 (HKDS…KENI), and 210-239 (VCKM…LKGE). Coiled-coil stretches lie at residues 251–278 (FEDI…KKCE) and 311–352 (SISA…ALEK).

This is Putative ankyrin repeat protein RBE_0984 from Rickettsia bellii (strain RML369-C).